Reading from the N-terminus, the 484-residue chain is MSEEKLPLLSPLNENDIENDYKDENLKSDLDKLSNVKKQSIIQRFKDYLKNSISKQTATVLVYVVLYILSGVINSLLLKKVMNVFTNYGFFLNQLTNYGYVPIFGAIVLYKILFTNDIPKDTRSFPQWKFVIMGALDAVTGYFVVIGGIKTTGPLQQLLNQSVIPFTMLLSFIFLKERYSLIQLGGALIIIGGVVVSLIPSLTGGNTSGNMLFYNFFYLISMIPYAFSNVYKAIGFSTVEDMDVWYLQYFDALYQSLVGTVLFPINNWLPPPSDMKFNQVIPQLKAGGKCLGGINTLIEQYNSTTGELLPTSCNYGDNLGCDNCHGAWVVVLIYMAVNVLYNVFILLVLKHAGATVFSIANTLRLPLTNIAFSFKFIMGSDSNPFSGLSVAGLCIILLGLGGYRVGSMIKQKKEAAASADSSSNTENKVIPKVFPTQFGEVSIIIKKKVPPKSQTHLRNQFFGKLGITVPESKLRNQNSIYGDQ.

Residues 1–57 (MSEEKLPLLSPLNENDIENDYKDENLKSDLDKLSNVKKQSIIQRFKDYLKNSISKQT) are Cytoplasmic-facing. A helical transmembrane segment spans residues 58 to 78 (ATVLVYVVLYILSGVINSLLL). Residues 79-94 (KKVMNVFTNYGFFLNQ) are Vacuolar-facing. Residues 95–115 (LTNYGYVPIFGAIVLYKILFT) traverse the membrane as a helical segment. Topologically, residues 116 to 128 (NDIPKDTRSFPQW) are cytoplasmic. A helical membrane pass occupies residues 129-149 (KFVIMGALDAVTGYFVVIGGI). The Vacuolar portion of the chain corresponds to 150-154 (KTTGP). Residues 155–175 (LQQLLNQSVIPFTMLLSFIFL) traverse the membrane as a helical segment. Topologically, residues 176 to 178 (KER) are cytoplasmic. A helical membrane pass occupies residues 179–199 (YSLIQLGGALIIIGGVVVSLI). Over 200-210 (PSLTGGNTSGN) the chain is Vacuolar. Residue asparagine 206 is glycosylated (N-linked (GlcNAc...) asparagine). Residues 211-231 (MLFYNFFYLISMIPYAFSNVY) form a helical membrane-spanning segment. Residues 232-244 (KAIGFSTVEDMDV) are Cytoplasmic-facing. The chain crosses the membrane as a helical span at residues 245–265 (WYLQYFDALYQSLVGTVLFPI). The Vacuolar segment spans residues 266-328 (NNWLPPPSDM…LGCDNCHGAW (63 aa)). Residue asparagine 302 is glycosylated (N-linked (GlcNAc...) asparagine). Residues 329 to 349 (VVVLIYMAVNVLYNVFILLVL) traverse the membrane as a helical segment. Residues 350–355 (KHAGAT) lie on the Cytoplasmic side of the membrane. A helical transmembrane segment spans residues 356–378 (VFSIANTLRLPLTNIAFSFKFIM). The Vacuolar segment spans residues 379 to 382 (GSDS). Residues 383 to 403 (NPFSGLSVAGLCIILLGLGGY) form a helical membrane-spanning segment. The Cytoplasmic segment spans residues 404–484 (RVGSMIKQKK…RNQNSIYGDQ (81 aa)).

Belongs to the CRT-like transporter family.

Its subcellular location is the vacuole membrane. Nutrient transporter. Involved in maintaining the osmotic homeostasis of the digestive vacuole. In Dictyostelium discoideum (Social amoeba), this protein is Crt homolog 2 (crtp2).